The following is a 232-amino-acid chain: Dehydrin DHN2 (232 aa).

The segment covering 1-12 (MSQYQNQYGAQT) has biased composition (polar residues). Disordered regions lie at residues 1–92 (MSQY…STNT), 131–156 (PGTE…SGGG), and 173–232 (PGDK…CTGH). Over residues 73–82 (THTGGVGGYG) the composition is skewed to gly residues. The segment covering 131 to 140 (PGTEQSRTHT) has biased composition (basic and acidic residues). Residues 143 to 156 (TGYGSTGYGASGGG) are compositionally biased toward gly residues. The segment covering 200–223 (YVREEHRVDHGEKKGIMDKIKEKL) has biased composition (basic and acidic residues).

This sequence belongs to the plant dehydrin family.

The sequence is that of Dehydrin DHN2 (DHN2) from Pisum sativum (Garden pea).